Here is a 159-residue protein sequence, read N- to C-terminus: Large ribosomal subunit protein uL30 (159 aa).

Belongs to the universal ribosomal protein uL30 family. As to quaternary structure, part of the 50S ribosomal subunit.

The polypeptide is Large ribosomal subunit protein uL30 (Aeropyrum pernix (strain ATCC 700893 / DSM 11879 / JCM 9820 / NBRC 100138 / K1)).